The primary structure comprises 201 residues: IMP cyclohydrolase (201 aa).

The protein belongs to the archaeal IMP cyclohydrolase family.

The catalysed reaction is IMP + H2O = 5-formamido-1-(5-phospho-D-ribosyl)imidazole-4-carboxamide. The protein operates within purine metabolism; IMP biosynthesis via de novo pathway; IMP from 5-formamido-1-(5-phospho-D-ribosyl)imidazole-4-carboxamide: step 1/1. Catalyzes the cyclization of 5-formylamidoimidazole-4-carboxamide ribonucleotide to IMP. The sequence is that of IMP cyclohydrolase from Methanococcus maripaludis (strain C5 / ATCC BAA-1333).